The sequence spans 130 residues: Small ribosomal subunit protein uS8 (130 aa).

It belongs to the universal ribosomal protein uS8 family. In terms of assembly, part of the 30S ribosomal subunit. Contacts proteins S5 and S12.

One of the primary rRNA binding proteins, it binds directly to 16S rRNA central domain where it helps coordinate assembly of the platform of the 30S subunit. This chain is Small ribosomal subunit protein uS8, found in Tolumonas auensis (strain DSM 9187 / NBRC 110442 / TA 4).